Here is a 543-residue protein sequence, read N- to C-terminus: CTP synthase (543 aa).

Positions 1–266 (MTKFIFVTGG…DDIICERFGI (266 aa)) are amidoligase domain. S13 provides a ligand contact to CTP. Residue S13 participates in UTP binding. ATP contacts are provided by residues 14-19 (SLGKGI) and D71. Residues D71 and E140 each contribute to the Mg(2+) site. CTP contacts are provided by residues 147–149 (DIE), 187–192 (KTKPTQ), and K223. Residues 187–192 (KTKPTQ) and K223 contribute to the UTP site. The 253-residue stretch at 291 to 543 (TVAIVGKYVE…VKAAIDHQNI (253 aa)) folds into the Glutamine amidotransferase type-1 domain. G354 is a binding site for L-glutamine. The active-site Nucleophile; for glutamine hydrolysis is C381. L-glutamine is bound by residues 382-385 (LGMQ), E404, and R471. Active-site residues include H516 and E518.

The protein belongs to the CTP synthase family. Homotetramer.

It carries out the reaction UTP + L-glutamine + ATP + H2O = CTP + L-glutamate + ADP + phosphate + 2 H(+). The catalysed reaction is L-glutamine + H2O = L-glutamate + NH4(+). The enzyme catalyses UTP + NH4(+) + ATP = CTP + ADP + phosphate + 2 H(+). Its pathway is pyrimidine metabolism; CTP biosynthesis via de novo pathway; CTP from UDP: step 2/2. Its activity is regulated as follows. Allosterically activated by GTP, when glutamine is the substrate; GTP has no effect on the reaction when ammonia is the substrate. The allosteric effector GTP functions by stabilizing the protein conformation that binds the tetrahedral intermediate(s) formed during glutamine hydrolysis. Inhibited by the product CTP, via allosteric rather than competitive inhibition. Functionally, catalyzes the ATP-dependent amination of UTP to CTP with either L-glutamine or ammonia as the source of nitrogen. Regulates intracellular CTP levels through interactions with the four ribonucleotide triphosphates. The polypeptide is CTP synthase (Psychrobacter sp. (strain PRwf-1)).